The primary structure comprises 99 residues: UPF0045 protein MTH_1187 (99 aa).

Belongs to the UPF0045 family. Homotetramer.

This Methanothermobacter thermautotrophicus (strain ATCC 29096 / DSM 1053 / JCM 10044 / NBRC 100330 / Delta H) (Methanobacterium thermoautotrophicum) protein is UPF0045 protein MTH_1187.